The sequence spans 771 residues: DNA helicase/primase complex-associated protein (771 aa).

This sequence belongs to the herpesviridae HEPA family. In terms of assembly, associates with the primase and the helicase to form the helicase-primase complex. Interacts with the origin-binding protein. Interacts with the polymerase catalytic subunit.

Its subcellular location is the host nucleus. Functionally, component of the helicase/primase complex. Unwinds the DNA at the replication forks and generates single-stranded DNA for both leading and lagging strand synthesis. The primase synthesizes short RNA primers on the lagging strand that the polymerase presumably elongates using dNTPs. The primase-associated factor has no known catalytic activity in the complex and may serve to facilitate the formation of the replisome by directly interacting with the origin-binding protein and the polymerase. The polypeptide is DNA helicase/primase complex-associated protein (Homo sapiens (Human)).